Reading from the N-terminus, the 62-residue chain is Phycobilisome degradation protein NblA homolog 1 (62 aa).

To Synechococcus PCC 7942 NblA and some, to chloroplast ycf18.

The polypeptide is Phycobilisome degradation protein NblA homolog 1 (Synechocystis sp. (strain ATCC 27184 / PCC 6803 / Kazusa)).